The sequence spans 567 residues: Microtubule-associated protein 70-1 (567 aa).

Positions Val38–Asp341 form a coiled coil. A required for targeting to microtubules region spans residues Ile220 to Ser440. Disordered regions lie at residues Lys425–Ser457 and Leu534–Met567. Residues Ser440–Asn453 are compositionally biased toward basic and acidic residues. Residues Lys516–Phe545 are a coiled coil.

It belongs to the MAP70 family.

It localises to the cytoplasm. It is found in the cytoskeleton. Plant-specific protein that interact with microtubules. In Oryza sativa subsp. japonica (Rice), this protein is Microtubule-associated protein 70-1 (MAP70.1).